A 3258-amino-acid polypeptide reads, in one-letter code: MVVTLTKLERLQKAEKSRTFKPLIDELINCEDAVFVGKLEAIREWDRPKDDLFLWIPVLDRMDDMLGKVVAKYKYHTTDCKRHPVKLIEMAKPDEDWVATLLFFTCRLLNNTSNRSLYSSLDMMSDLLNCPNFRVKLGAMKVIATIGERHVVARHRIENSSVLASQHLKKRSLSLALALPSSTTDDNSDHFSLVDLFFDKRKYPSKWSQLQYTYYITKKQAGQQSTQKPSQVSSMKRFVLNNEELRFLSLQQIFDRAMNDLPSEFWFDFSLQASIAKAFSDDSFENIQLRSLIIQTKFAAIAFANAIYIPPQVSSKLFEMDPYAFNNLTDFISLSETKIPKDLRTDALFALECISLKHVWCSDIVRNLGGNMSHGLLFQILRYIAKVLREGDEDAVDEEYNVRFFYLISNLADVKALQESLISAGLISSLLEIVSTQNSKYKRTLASAAHLLEDVISDADATAEFINNNGFNILIQTVTYEVNFAVQNPSSAEPPKYSVVYYSISFRQLGFIRSLLKLVLKLLKTDSGDRIRNLIDSPILLAFNKILENRPVFGYTLVSHALDVVQTIINTEPTIYQVLVESGTIPYILQNFDQFLGPTSDLLCMLPEVISAICLNTDGLKQVKEKNLLKYLFQVIKTPEFAKILSWEDQAVNYGVALDELARHYPELKPLIEDYFAATVKELPSLTSYTHSYLYESTAGNGEFYLSENETIIDNEDGADELAFWEVQESSPIIDCFSGVFYSMASENISWANLTEKIAFQDFLSVAIPEKPTFDYINSQTLLNFTDVLKMFDDERRSYALPELLTILDSKFADLEDFLSYDFTKSYVLNEPKDRVVATLNKLNVLNVILYIMTDIYINITTLFPVRVIQMMEFFEKNGFNLITNLRKMFQRCVLEEMYIRSRLPPAVAEETISPGISFVPPILIHKDVPLKTEAKQEKTSAKFKNTLETRHLFQKVQSWTSMLFRCFLRLTHARKMNVERYDRALEIRIFDKVVNEIVEMLNLDYLDSHLSYFLVVLDFNTHIFTCPKASLTISDGIVQTVPTFLFYQAGGFAIYHELIKKLSTRLLGFDGIEAIEKVEYVKDQDDILTVGVLMNSIAFMNRCIQLETMENIRSIAEYYPYDDIYYNLTRALIVPVKILSLGAISEIFSQGEVFDTDRRRIPYSVFKQILSLLKNIYNSTFELEEGTDVYELRWDLMPISHRKVEMLKSCGISHDVAVGYLEEEKDELPIHVKPDVFSDSEWQRYQEERSSGSWRTNIELLPPQYNGSSTRETLSKMRTEFYQNGFESGILKILQHYPKLINAISHMFFEMYGELGFSHTTMLEDLQDMMNTIPIENTNKLAPVIHLFGIFLNDKNIYDQAKKEIFKFVSYLSMNLHPENVNYSWFSKALYVYEIIFAKSETPEASPLPENVTVSFSSIPIIYRISQKDKDIIFNLLIRANEVTDFYSALAISRILILYTREERYAQEVTQSGILSKLLKVIGANQKFDKINYLESSYLLLVRRCFETKEIVTSLIDYELTRAFTTRAIGDHKEKPRDLPALVNEKASIVMRDPEVFVNRISETARFEDFNSSKELASLSVRRHMDEKDEEMTSKPLSSEGSNSPITGIVHLLLSQLMAAHKRDWVSETPLTPEEENQKNKKKKDEVKVSKNPVCAYMIFLLKVLTELVSSYKQSKFEFLTYNKKNVYNETPKPRATALNFFLYQLLDTNFQDMDKHEGKRRAMISGLARDTIIGFVSSVQDSETKKVDPKIVDSDMTYIRKFTIEAISKAIKEAGVSAKTIDANAGKLFGWFHLISSLLVVDKGYIFSVLDSNKSSNDKYQLCKLLIEMNTPGTITDCMASLDLNYPLTKKLFNSAVEPLNALNEVRNNFADLFKLENNEDEDVEDVESDKDDVPDMFKNSALGMYDIEDVEDDHDDDENESLIGDDEDIAFVHDEDGLEVVFSEDEDANEDTTDASNSIGSDSEGNSDFGGSGPNVTLEVYTDSEDAIEDVNTAAIRITSGNSAEHSYYSEGEDSAEIEIYEEEYDSEIDIDMDDDSELGSSNWESGLSDLSDSEAYSDEERTNNTGDGFVRWYSDDGVEFEDDTDEEGRGLFTGIQHVFPTEEQLFRVHASGAARSTGRHHHRHGAAPFTTSTITLGASQRRPHSILSNPLGPSGLEEVENDIVSHYLGNVETSDRIGLSSIPRLPRVLLFDGELFDDKSSSGILLKSTTARWNDIYEMFYDSKVYSNNVVTTIISRIFEPSAELYLKEQEENAVKESSRINEPTRRQDERKRKLHEIDSDEEHIEEEEEHDEVVEPIEAPGINSPQARAPQEPVYVTIDGEAVNIAGTDMDAEFLNALPDDIRAEVFAQHIREYRTQFQGSEGSSRELDAGFLNTIPETLRQEILAQEVPLERNARPSILGLRNREGEEFSEVEDESPRFNEQRTESSKTKTDRVHFAPLLDRSGIAAIMKAVFIPQPYLSREIYHELFYRLCSSKQNRSDIMNMLLLILMDGINDQHSLERVYNLLSNRAASSNSGTSKTPQRQLPPDCTPLIVTNQCIEILQSMVDADSKLKYFFITEHENLLINKSPLKNKKDIFSKNMKWPINCILALLEKKVITDEAVLMDLLTRILQVCSKPISSIVKSSKDGKKKKFEVPDIEKKYLASIVSIIKLDSCNTKVFQQTLNLMTNLFAIKDAHETFTTELCNLAKETIEVLVTDLDALAKEVPAVDSGTEVSSEIIQKFTVPSSDQSKLLKVLTAIDYIYVNRKKEEEQVVDQLLPLYNKMELGHIWVSLSNCLTRFEEKPRMSTSATILLPLIESLMVVCKHSKVRETKDALLKYEAKKCDFARTPVENLFFAFTDLHKKLLNEMIRSNPKLMSGPFSLLVKNPKILDFDNKRYYFTAQLRAITHDRPKLSISVRREHVFLDSYRSLFFKSNEDIKISKLEISFKGEAGVDAGGITREWYQVLSRQMFNPDYALFIPVASDKTTFRPNRTSGINPEHLSFFKFIGMIIGKAISDQCFLDCHFSREVYKNILGKPVALKDMESLDLDYYKSLIWILENDITDIIEETFSVETDDYGEHKVIELIENGAHVAVTEQNKHDYVKKIVEYKLQTSVKDQMENFLQGFYAIIPKDLISIFDEQELELLVSGLPDIDVDDWKNNTIYVNYTPTCKQINYFWRAVRSFDKEERAKLLQFVTGTSKVPLNGFKELSGVNGISKFSIHRDYGSIDRLPSSHTCFNQLDLPAYDSYETLRGSLLLAINEGHEGFGIA.

Disordered stretches follow at residues 1582–1603, 1945–1981, 2036–2074, 2254–2298, and 2411–2436; these read VRRH…SEGS, FSED…NVTL, MDDD…DGFV, QEEN…HDEV, and EGEE…SKTK. Residues 1584–1594 are compositionally biased toward basic and acidic residues; the sequence is RHMDEKDEEMT. A compositionally biased stretch (acidic residues) spans 1945 to 1956; it reads FSEDEDANEDTT. Composition is skewed to polar residues over residues 1959–1969 and 2042–2054; these read SNSIGSDSEGN and LGSS…LSDL. Over residues 2254–2282 the composition is skewed to basic and acidic residues; it reads QEENAVKESSRINEPTRRQDERKRKLHEI. Over residues 2283-2298 the composition is skewed to acidic residues; the sequence is DSDEEHIEEEEEHDEV. Residues 2421–2436 are compositionally biased toward basic and acidic residues; the sequence is ESPRFNEQRTESSKTK. The 337-residue stretch at 2922–3258 folds into the HECT domain; the sequence is SNEDIKISKL…NEGHEGFGIA (337 aa). The active-site Glycyl thioester intermediate is cysteine 3225.

The protein belongs to the UPL family. TOM1/PTR1 subfamily.

It is found in the nucleus. It localises to the nucleolus. It carries out the reaction S-ubiquitinyl-[E2 ubiquitin-conjugating enzyme]-L-cysteine + [acceptor protein]-L-lysine = [E2 ubiquitin-conjugating enzyme]-L-cysteine + N(6)-ubiquitinyl-[acceptor protein]-L-lysine.. It functions in the pathway protein modification; protein ubiquitination. Probable ubiquitin ligase protein, which may be involved in mRNA export. E3 ubiquitin ligase proteins mediate ubiquitination and subsequent proteasomal degradation of target proteins. Participates in mRNA export from the nucleus by regulating the transport of hnRNP proteins. The chain is Probable E3 ubiquitin-protein ligase TOM1 (TOM1) from Eremothecium gossypii (strain ATCC 10895 / CBS 109.51 / FGSC 9923 / NRRL Y-1056) (Yeast).